A 90-amino-acid chain; its full sequence is Acylphosphatase (90 aa).

Residues Arg-4–Tyr-90 form the Acylphosphatase-like domain. Catalysis depends on residues Arg-19 and Asn-37.

Belongs to the acylphosphatase family.

The enzyme catalyses an acyl phosphate + H2O = a carboxylate + phosphate + H(+). This Sulfurisphaera tokodaii (strain DSM 16993 / JCM 10545 / NBRC 100140 / 7) (Sulfolobus tokodaii) protein is Acylphosphatase (acyP).